Reading from the N-terminus, the 102-residue chain is Defensin (102 aa).

The signal sequence occupies residues 1 to 25 (MKCATIVCTIAVVLAATLLNGSVQA). Residues 26 to 62 (APQEEAALSGGANLNTLLDELPEETHHAALENYRAKR) constitute a propeptide that is removed on maturation. 3 disulfides stabilise this stretch: Cys-65-Cys-92, Cys-78-Cys-98, and Cys-82-Cys-100.

This sequence belongs to the invertebrate defensin family. Type 1 subfamily.

It is found in the secreted. Functionally, responsible for the anti Gram-positive activity of immune hemolymph. The polypeptide is Defensin (Def1) (Anopheles gambiae (African malaria mosquito)).